The primary structure comprises 275 residues: Formamidopyrimidine-DNA glycosylase (275 aa).

The Schiff-base intermediate with DNA role is filled by proline 2. Glutamate 3 functions as the Proton donor in the catalytic mechanism. Lysine 58 functions as the Proton donor; for beta-elimination activity in the catalytic mechanism. DNA contacts are provided by histidine 91, arginine 109, and arginine 154. An FPG-type zinc finger spans residues 240–274; sequence AVYERAGLPCRVCGAPIRRLVQGQRATYFCPSCQK. Residue arginine 264 is the Proton donor; for delta-elimination activity of the active site.

Belongs to the FPG family. In terms of assembly, monomer. Requires Zn(2+) as cofactor.

The enzyme catalyses Hydrolysis of DNA containing ring-opened 7-methylguanine residues, releasing 2,6-diamino-4-hydroxy-5-(N-methyl)formamidopyrimidine.. It carries out the reaction 2'-deoxyribonucleotide-(2'-deoxyribose 5'-phosphate)-2'-deoxyribonucleotide-DNA = a 3'-end 2'-deoxyribonucleotide-(2,3-dehydro-2,3-deoxyribose 5'-phosphate)-DNA + a 5'-end 5'-phospho-2'-deoxyribonucleoside-DNA + H(+). Its function is as follows. Involved in base excision repair of DNA damaged by oxidation or by mutagenic agents. Acts as a DNA glycosylase that recognizes and removes damaged bases. Has a preference for oxidized purines, such as 7,8-dihydro-8-oxoguanine (8-oxoG). Has AP (apurinic/apyrimidinic) lyase activity and introduces nicks in the DNA strand. Cleaves the DNA backbone by beta-delta elimination to generate a single-strand break at the site of the removed base with both 3'- and 5'-phosphates. The polypeptide is Formamidopyrimidine-DNA glycosylase (Bordetella parapertussis (strain 12822 / ATCC BAA-587 / NCTC 13253)).